A 566-amino-acid chain; its full sequence is 3-oxosteroid 1-dehydrogenase (566 aa).

10–39 provides a ligand contact to FAD; sequence DVVVVGSGAAGMVAALVAAHRGLSTVVVEK.

Belongs to the FAD-dependent oxidoreductase 2 family. 3-oxosteroid dehydrogenase subfamily. It depends on FAD as a cofactor.

It catalyses the reaction a 3-oxosteroid + A = a 3-oxo-Delta(1)-steroid + AH2. It carries out the reaction a 3-oxo-Delta(4)-steroid + A = a 3-oxo-Delta(1,4)-steroid + AH2. In terms of biological role, involved in the degradation of cholesterol. Catalyzes the elimination of the C-1 and C-2 hydrogen atoms of the A-ring from the polycyclic ring structure of 3-ketosteroids. Is also involved in the formation of 3-keto-1,4-diene-steroid from 3-keto-4-ene-steroid. In Mycobacterium tuberculosis (strain CDC 1551 / Oshkosh), this protein is 3-oxosteroid 1-dehydrogenase (kstD).